The chain runs to 402 residues: Speedy protein E5 (402 aa).

The disordered stretch occupies residues 1 to 89 (MDRTETRFRK…EEPEKELAPE (89 aa)). Residues 16–39 (EKITTSRQPQPQNEQSPQRSTSGY) are compositionally biased toward polar residues. Residues 76-89 (DESAEEPEKELAPE) are compositionally biased toward acidic residues.

Belongs to the Speedy/Ringo family.

This Homo sapiens (Human) protein is Speedy protein E5 (SPDYE5).